We begin with the raw amino-acid sequence, 643 residues long: Sodium-dependent nutrient amino acid transporter 1 (643 aa).

The interval 1–38 (MELKGVQPSNGSPNGNGNGATNAASTEKTDAEKPTAER) is disordered. Residues 1-40 (MELKGVQPSNGSPNGNGNGATNAASTEKTDAEKPTAERTN) are Cytoplasmic-facing. The segment covering 8–26 (PSNGSPNGNGNGATNAAST) has biased composition (low complexity). The span at 27–36 (EKTDAEKPTA) shows a compositional bias: basic and acidic residues. Helical transmembrane passes span 41–61 (WGNG…LGNV), 74–94 (GAFL…MYYL), and 111–131 (SVVP…ICII). 3 N-linked (GlcNAc...) asparagine glycosylation sites follow: Asn185, Asn190, and Asn200. 9 helical membrane-spanning segments follow: residues 231 to 251 (PDWK…LVIM), 260 to 280 (AAYF…IRAV), 309 to 329 (AVVQ…MFAS), 343 to 363 (IVTT…FAIL), 403 to 423 (LFSV…IVAL), 449 to 469 (VCGF…ILTL), 476 to 496 (TYVV…VYGL), 518 to 538 (CWSF…MATI), and 554 to 574 (VAGW…GLWY).

Belongs to the sodium:neurotransmitter symporter (SNF) (TC 2.A.22) family.

Its subcellular location is the membrane. Its function is as follows. Unusual broad substrate spectrum amino acid:sodium cotransporter that promotes absorption of the D isomers of essential amino acids. Neutral amino acids are the preferred substrates, especially methionine and phenylalanine. This is Sodium-dependent nutrient amino acid transporter 1 from Drosophila simulans (Fruit fly).